Consider the following 307-residue polypeptide: UDP-N-acetylenolpyruvoylglucosamine reductase (307 aa).

The region spanning 34–197 is the FAD-binding PCMH-type domain; that stretch reads VGGNAEALFR…LSASLKGRPG (164 aa). Arginine 177 is a catalytic residue. Serine 226 (proton donor) is an active-site residue. The active site involves glutamate 296.

It belongs to the MurB family. The cofactor is FAD.

The protein resides in the cytoplasm. It catalyses the reaction UDP-N-acetyl-alpha-D-muramate + NADP(+) = UDP-N-acetyl-3-O-(1-carboxyvinyl)-alpha-D-glucosamine + NADPH + H(+). It functions in the pathway cell wall biogenesis; peptidoglycan biosynthesis. Cell wall formation. This chain is UDP-N-acetylenolpyruvoylglucosamine reductase, found in Paramagnetospirillum magneticum (strain ATCC 700264 / AMB-1) (Magnetospirillum magneticum).